Here is a 604-residue protein sequence, read N- to C-terminus: Ectonucleoside triphosphate diphosphohydrolase 7 (604 aa).

Residues M1–R28 lie on the Cytoplasmic side of the membrane. Residues V29–F49 form a helical membrane-spanning segment. The Vesicular portion of the chain corresponds to R50–S546. E217 serves as the catalytic Proton acceptor. An N-linked (GlcNAc...) asparagine glycan is attached at N330. C448 and C477 form a disulfide bridge. A helical transmembrane segment spans residues F547–L567. At Y568–P604 the chain is on the cytoplasmic side.

The protein belongs to the GDA1/CD39 NTPase family. Ca(2+) serves as cofactor. Mg(2+) is required as a cofactor.

The protein resides in the cytoplasmic vesicle membrane. It catalyses the reaction a ribonucleoside 5'-triphosphate + H2O = a ribonucleoside 5'-diphosphate + phosphate + H(+). It carries out the reaction UTP + H2O = UDP + phosphate + H(+). The catalysed reaction is GTP + H2O = GDP + phosphate + H(+). The enzyme catalyses CTP + H2O = CDP + phosphate + H(+). Its function is as follows. Catalyzes the hydrolysis of nucleoside triphosphates and diphosphates in a calcium- or magnesium-dependent manner. Preferentially hydrolyzes nucleoside 5'-triphosphates, with substrate preference for UTP &gt; GTP &gt; CTP. Hydrolyzes ATP and nucleoside diphosphates only to a minor extent. The chain is Ectonucleoside triphosphate diphosphohydrolase 7 (ENTPD7) from Pongo abelii (Sumatran orangutan).